A 374-amino-acid polypeptide reads, in one-letter code: Ribosomal RNA large subunit methyltransferase G (374 aa).

This sequence belongs to the methyltransferase superfamily. RlmG family.

The protein resides in the cytoplasm. It carries out the reaction guanosine(1835) in 23S rRNA + S-adenosyl-L-methionine = N(2)-methylguanosine(1835) in 23S rRNA + S-adenosyl-L-homocysteine + H(+). Its function is as follows. Specifically methylates the guanine in position 1835 (m2G1835) of 23S rRNA. This is Ribosomal RNA large subunit methyltransferase G from Pseudomonas aeruginosa (strain UCBPP-PA14).